Here is a 590-residue protein sequence, read N- to C-terminus: V-type ATP synthase alpha chain (590 aa).

Gly231–Thr238 contributes to the ATP binding site.

It belongs to the ATPase alpha/beta chains family.

It carries out the reaction ATP + H2O + 4 H(+)(in) = ADP + phosphate + 5 H(+)(out). Produces ATP from ADP in the presence of a proton gradient across the membrane. The V-type alpha chain is a catalytic subunit. The sequence is that of V-type ATP synthase alpha chain from Clostridium botulinum (strain Langeland / NCTC 10281 / Type F).